A 256-amino-acid chain; its full sequence is Type III pantothenate kinase (256 aa).

Asp-7 to Lys-14 lines the ATP pocket. Substrate-binding positions include Tyr-96 and Gly-103–Arg-106. Asp-105 (proton acceptor) is an active-site residue. Thr-133 is an ATP binding site. Residue Thr-183 coordinates substrate.

The protein belongs to the type III pantothenate kinase family. As to quaternary structure, homodimer. It depends on NH4(+) as a cofactor. K(+) serves as cofactor.

The protein resides in the cytoplasm. It catalyses the reaction (R)-pantothenate + ATP = (R)-4'-phosphopantothenate + ADP + H(+). It participates in cofactor biosynthesis; coenzyme A biosynthesis; CoA from (R)-pantothenate: step 1/5. Functionally, catalyzes the phosphorylation of pantothenate (Pan), the first step in CoA biosynthesis. This Verminephrobacter eiseniae (strain EF01-2) protein is Type III pantothenate kinase.